The primary structure comprises 290 residues: Ribonuclease HIII (290 aa).

Positions 78–290 (LPLIGTDEVG…FKNTEKAKNA (213 aa)) constitute an RNase H type-2 domain. Positions 84, 85, and 187 each coordinate a divalent metal cation.

Belongs to the RNase HII family. RnhC subfamily. Mn(2+) is required as a cofactor. Requires Mg(2+) as cofactor.

It is found in the cytoplasm. It carries out the reaction Endonucleolytic cleavage to 5'-phosphomonoester.. Endonuclease that specifically degrades the RNA of RNA-DNA hybrids. In Streptococcus pneumoniae serotype 2 (strain D39 / NCTC 7466), this protein is Ribonuclease HIII.